The primary structure comprises 523 residues: WD repeat-containing protein YPL247C (523 aa).

Positions 1–64 (MDPFHNGNKR…TTNGGNSKRN (64 aa)) are disordered. Residues 9–40 (KRSSISFGSSQRQPYNKNNYLSGTNGPSSAAQ) show a composition bias toward polar residues. A Phosphoserine modification is found at serine 47. Positions 52–64 (SGNTTNGGNSKRN) are enriched in low complexity. Serine 65 carries the phosphoserine modification. 4 WD repeats span residues 173–213 (DVVY…RQFQ), 241–281 (GTFP…YVKT), 285–325 (AHDS…HSTI), and 392–432 (GHGS…MEIN). Residues 436–472 (SKSPSIHGTSLEDPDGDTEMTDGGAGSGLNEDPLSLN) form a disordered region.

It belongs to the WD repeat WDR68 family.

Its subcellular location is the cytoplasm. The protein resides in the nucleus. The polypeptide is WD repeat-containing protein YPL247C (Saccharomyces cerevisiae (strain ATCC 204508 / S288c) (Baker's yeast)).